The chain runs to 229 residues: Ribose-5-phosphate isomerase A (229 aa).

Substrate-binding positions include 28–31 (TGST), 84–87 (DGAD), and 97–100 (KGGG). The active-site Proton acceptor is glutamate 106. Lysine 124 is a substrate binding site.

It belongs to the ribose 5-phosphate isomerase family. In terms of assembly, homodimer.

The catalysed reaction is aldehydo-D-ribose 5-phosphate = D-ribulose 5-phosphate. Its pathway is carbohydrate degradation; pentose phosphate pathway; D-ribose 5-phosphate from D-ribulose 5-phosphate (non-oxidative stage): step 1/1. Catalyzes the reversible conversion of ribose-5-phosphate to ribulose 5-phosphate. This Lacticaseibacillus paracasei (strain ATCC 334 / BCRC 17002 / CCUG 31169 / CIP 107868 / KCTC 3260 / NRRL B-441) (Lactobacillus paracasei) protein is Ribose-5-phosphate isomerase A.